The following is a 241-amino-acid chain: Small ribosomal subunit protein uS3 (241 aa).

The KH type-2 domain occupies 39-107; that stretch reads IREVLMKNLK…EVVINIVEVR (69 aa). The segment at 219–241 is disordered; sequence MAELDHAGGGGGGERRRRERDAA. Residues 231–241 are compositionally biased toward basic and acidic residues; the sequence is GERRRRERDAA.

Belongs to the universal ribosomal protein uS3 family. Part of the 30S ribosomal subunit. Forms a tight complex with proteins S10 and S14.

Its function is as follows. Binds the lower part of the 30S subunit head. Binds mRNA in the 70S ribosome, positioning it for translation. This chain is Small ribosomal subunit protein uS3, found in Beijerinckia indica subsp. indica (strain ATCC 9039 / DSM 1715 / NCIMB 8712).